Reading from the N-terminus, the 338-residue chain is Secretion system apparatus protein SsaL (338 aa).

The sequence is that of Secretion system apparatus protein SsaL (ssaL) from Salmonella typhimurium (strain LT2 / SGSC1412 / ATCC 700720).